A 355-amino-acid chain; its full sequence is Double-stranded RNA-binding protein 4 (355 aa).

DRBM domains lie at 4–73 (VYKG…SLTP) and 82–150 (AYKN…SIKN). Residues 149-188 (KNGNSNQTGSPTLPSERQEDVNSNVKSSPQEIHSQPSSKV) are compositionally biased toward polar residues. Residues 149 to 193 (KNGNSNQTGSPTLPSERQEDVNSNVKSSPQEIHSQPSSKVVMTPD) are disordered.

As to quaternary structure, heterodimer with DRB1 or DRB5. Interacts with DCL4 and cauliflower mosaic virus (CaMV) transactivator/viroplasmin protein. Interaction with CaMV transactivator/viroplasmin protein inhibits RNA silencing ability of DRB4. Expressed in roots, leaf vasculature, shoot apical meristem (SAM) and developing anthers.

Its subcellular location is the nucleus. Double-stranded RNA-binding protein involved in RNA-mediated post-transcriptional gene silencing (PTGS). Functions in the trans-acting small interfering RNAs (ta-siRNAs) biogenesis by binding and assisting DICER-LIKE 4 (DCL4). Required for DCL4 activity. Required for the 21 nucleotide ta-siRNAs production of the TAS3 transcript in leaves but not in flowers. Plays an important role in silencing RNA of both DNA and RNA viruses. Involved with argonaute 7 (AGO7) and RDR6 in turnip crinkle virus (TCV) silencing. May not be directly involved in viral siRNA production. May stabilize the 21 nucleotide viral siRNAs and deliver them to the RISC complex. Targeted by the viral silencing suppressor (VSR) transactivator/viroplasmin (TAV) protein of the cauliflower mosaic virus (CaMV) that inactivates DRB4 function in RNA silencing. Probably not involved in the guide strand selection from RNA duplexes. Involved in leaf morphology through its function in ta-siRNA-mediated silencing. This chain is Double-stranded RNA-binding protein 4 (DBR4), found in Arabidopsis thaliana (Mouse-ear cress).